A 137-amino-acid chain; its full sequence is ATP synthase epsilon chain, chloroplastic (137 aa).

The protein belongs to the ATPase epsilon chain family. In terms of assembly, F-type ATPases have 2 components, CF(1) - the catalytic core - and CF(0) - the membrane proton channel. CF(1) has five subunits: alpha(3), beta(3), gamma(1), delta(1), epsilon(1). CF(0) has three main subunits: a, b and c.

The protein resides in the plastid. Its subcellular location is the chloroplast thylakoid membrane. Its function is as follows. Produces ATP from ADP in the presence of a proton gradient across the membrane. The sequence is that of ATP synthase epsilon chain, chloroplastic from Pinus thunbergii (Japanese black pine).